The following is an 808-amino-acid chain: Sucrose synthase isoform 1 (808 aa).

The tract at residues 277-754 (MVFNVVILSP…GLKRIQEKYT (478 aa)) is GT-B glycosyltransferase.

The protein belongs to the glycosyltransferase 1 family. Plant sucrose synthase subfamily. In terms of assembly, homotetramer. In terms of tissue distribution, expressed in stems, in roots at different developmental stages, and in flower buds, flowers and maturing seeds, with the highest levels in strong utilization sinks for sucrose such as growing stems and tap root tips.

The enzyme catalyses an NDP-alpha-D-glucose + D-fructose = a ribonucleoside 5'-diphosphate + sucrose + H(+). With respect to regulation, fructose acts as a non-competitive inhibitor with an inhibition constant of 17.2 mM. In contrast, glucose inhibits uncompetitively with an inhibition constant of 4.3 mM. In terms of biological role, sucrose-cleaving enzyme that provides UDP-glucose and fructose for various metabolic pathways. The chain is Sucrose synthase isoform 1 from Daucus carota (Wild carrot).